Consider the following 261-residue polypeptide: MHKPIKKLGQNFLKDKKIIKKIINFINPKYKDKIIEIGPGLGALTIPISKISKSITAIEIDKNLVYFLNKNKNIKNNLNIINIDIMKLNLKKFFSSFCDPVRIFGSLPYNISVSLMFNFIENYNKIIDMHFVIQKEVAQRILARPNNKHYGYISVIMQYYFYVEKLIDISNCAFKPIPKVQSSLIRMRPHKVCPFPFCDIDKMKVLLKSAFNQRRKMLKNSLKKYFSVEQIILYKINPKLRAENLSIENYCNLSNNMIIKK.

Residues asparagine 11, leucine 13, glycine 38, glutamate 59, aspartate 84, and serine 106 each coordinate S-adenosyl-L-methionine.

It belongs to the class I-like SAM-binding methyltransferase superfamily. rRNA adenine N(6)-methyltransferase family. RsmA subfamily.

The protein localises to the cytoplasm. The enzyme catalyses adenosine(1518)/adenosine(1519) in 16S rRNA + 4 S-adenosyl-L-methionine = N(6)-dimethyladenosine(1518)/N(6)-dimethyladenosine(1519) in 16S rRNA + 4 S-adenosyl-L-homocysteine + 4 H(+). Functionally, specifically dimethylates two adjacent adenosines (A1518 and A1519) in the loop of a conserved hairpin near the 3'-end of 16S rRNA in the 30S particle. May play a critical role in biogenesis of 30S subunits. This is Ribosomal RNA small subunit methyltransferase A from Wigglesworthia glossinidia brevipalpis.